Consider the following 415-residue polypeptide: AP-3 complex subunit mu (415 aa).

Residues 178-414 (SNEVYVDLVE…QTRAGEFDVR (237 aa)) form the MHD domain.

Belongs to the adaptor complexes medium subunit family. As to quaternary structure, adaptor protein complex 3 (AP-3) is a heterotetramer composed of two large adaptins (delta-type subunit and beta-type subunit), a medium adaptin (mu-type subunit) and a small adaptin (sigma-type subunit).

The protein resides in the cytoplasm. Its subcellular location is the golgi apparatus. It localises to the cytoplasmic vesicle membrane. Its function is as follows. Part of the AP-3 complex, an adaptor-related complex which seems to be clathrin-associated. The complex is associated with the Golgi region as well as more peripheral structures. It facilitates the budding of vesicles from the Golgi membrane and may be directly involved in trafficking to the vacuole. It also functions in maintaining the identity of lytic vacuoles and in regulating the transition between storage and lytic vacuoles. This chain is AP-3 complex subunit mu (AP3M), found in Arabidopsis thaliana (Mouse-ear cress).